The sequence spans 192 residues: N-terminal acetyltransferase A complex catalytic subunit NAA10 (192 aa).

Positions 2-152 (VCIRRATVDD…DAYDMRKNLK (151 aa)) constitute an N-acetyltransferase domain.

It belongs to the acetyltransferase family. ARD1 subfamily. Part of the NatA complex. Interacts with NAA15. As to expression, expressed in leaves, roots, shoots and flowers.

The enzyme catalyses N-terminal glycyl-[protein] + acetyl-CoA = N-terminal N(alpha)-acetylglycyl-[protein] + CoA + H(+). It catalyses the reaction N-terminal L-alanyl-[protein] + acetyl-CoA = N-terminal N(alpha)-acetyl-L-alanyl-[protein] + CoA + H(+). It carries out the reaction N-terminal L-seryl-[protein] + acetyl-CoA = N-terminal N(alpha)-acetyl-L-seryl-[protein] + CoA + H(+). The catalysed reaction is N-terminal L-valyl-[protein] + acetyl-CoA = N-terminal N(alpha)-acetyl-L-valyl-[protein] + CoA + H(+). The enzyme catalyses N-terminal L-cysteinyl-[protein] + acetyl-CoA = N-terminal N(alpha)-acetyl-L-cysteinyl-[protein] + CoA + H(+). It catalyses the reaction N-terminal L-threonyl-[protein] + acetyl-CoA = N-terminal N(alpha)-acetyl-L-threonyl-[protein] + CoA + H(+). Catalytic subunit of the NatA N-alpha-acetyltransferase complex. Required for male gametocyte development, embryogenesis, suspensor development and the formation of the quiescent center (QC) in the root meristem. Involved in plant immunity through the regulation of SNC1 and RPM1 stability. The polypeptide is N-terminal acetyltransferase A complex catalytic subunit NAA10 (Arabidopsis thaliana (Mouse-ear cress)).